A 462-amino-acid polypeptide reads, in one-letter code: Argininosuccinate lyase (462 aa).

The protein belongs to the lyase 1 family. Argininosuccinate lyase subfamily.

The protein localises to the cytoplasm. The catalysed reaction is 2-(N(omega)-L-arginino)succinate = fumarate + L-arginine. It participates in amino-acid biosynthesis; L-arginine biosynthesis; L-arginine from L-ornithine and carbamoyl phosphate: step 3/3. In Prochlorococcus marinus (strain MIT 9211), this protein is Argininosuccinate lyase.